Reading from the N-terminus, the 722-residue chain is Probable cation-transporting ATPase HI_0290 (722 aa).

Residues K9 to H75 enclose the HMA domain. The a metal cation site is built by C20 and C23. The next 6 membrane-spanning stretches (helical) occupy residues L94–G114, L118–I138, V157–H177, H180–G200, V340–T360, and V373–G393. D422 acts as the 4-aspartylphosphate intermediate in catalysis. 4 helical membrane passes run I523–A543, L608–A628, L675–S695, and I697–L717. 2 residues coordinate Mg(2+): D617 and D621.

It belongs to the cation transport ATPase (P-type) (TC 3.A.3) family. Type IB subfamily.

The protein localises to the cell membrane. The enzyme catalyses ATP + H2O = ADP + phosphate + H(+). This is Probable cation-transporting ATPase HI_0290 from Haemophilus influenzae (strain ATCC 51907 / DSM 11121 / KW20 / Rd).